The following is a 376-amino-acid chain: Queuine tRNA-ribosyltransferase (376 aa).

Aspartate 89 serves as the catalytic Proton acceptor. Substrate-binding positions include 89 to 93 (DSGGF), aspartate 143, glutamine 194, and glycine 221. Positions 252–258 (GVGLPSN) are RNA binding. Catalysis depends on aspartate 271, which acts as the Nucleophile. Residues 276-280 (ARNGR) form an RNA binding; important for wobble base 34 recognition region. Residues cysteine 309, cysteine 311, cysteine 314, and histidine 340 each contribute to the Zn(2+) site.

The protein belongs to the queuine tRNA-ribosyltransferase family. As to quaternary structure, homodimer. Within each dimer, one monomer is responsible for RNA recognition and catalysis, while the other monomer binds to the replacement base PreQ1. Zn(2+) serves as cofactor.

It catalyses the reaction 7-aminomethyl-7-carbaguanine + guanosine(34) in tRNA = 7-aminomethyl-7-carbaguanosine(34) in tRNA + guanine. Its pathway is tRNA modification; tRNA-queuosine biosynthesis. Catalyzes the base-exchange of a guanine (G) residue with the queuine precursor 7-aminomethyl-7-deazaguanine (PreQ1) at position 34 (anticodon wobble position) in tRNAs with GU(N) anticodons (tRNA-Asp, -Asn, -His and -Tyr). Catalysis occurs through a double-displacement mechanism. The nucleophile active site attacks the C1' of nucleotide 34 to detach the guanine base from the RNA, forming a covalent enzyme-RNA intermediate. The proton acceptor active site deprotonates the incoming PreQ1, allowing a nucleophilic attack on the C1' of the ribose to form the product. After dissociation, two additional enzymatic reactions on the tRNA convert PreQ1 to queuine (Q), resulting in the hypermodified nucleoside queuosine (7-(((4,5-cis-dihydroxy-2-cyclopenten-1-yl)amino)methyl)-7-deazaguanosine). The protein is Queuine tRNA-ribosyltransferase of Clostridium tetani (strain Massachusetts / E88).